We begin with the raw amino-acid sequence, 440 residues long: Adenylyltransferase and sulfurtransferase UBA4 (440 aa).

M1 is subject to N-acetylmethionine. ATP is bound by residues G77, D98, 105-109, K122, and 166-167; these read SNLHR and DS. Positions 208 and 211 each coordinate Zn(2+). C225 functions as the Glycyl thioester intermediate; for adenylyltransferase activity in the catalytic mechanism. Residues C286 and C289 each coordinate Zn(2+). The residue at position 326 (S326) is a Phosphoserine. The Rhodanese domain maps to 339–438; sequence FLAKHIFLDV…YIDDIDQTIP (100 aa). The Cysteine persulfide intermediate; for sulfurtransferase activity role is filled by C397.

In the N-terminal section; belongs to the HesA/MoeB/ThiF family. UBA4 subfamily. The cofactor is Zn(2+).

Its subcellular location is the cytoplasm. The protein localises to the cytosol. It functions in the pathway tRNA modification; 5-methoxycarbonylmethyl-2-thiouridine-tRNA biosynthesis. Functionally, plays a central role in 2-thiolation of mcm(5)S(2)U at tRNA wobble positions of cytosolic tRNA(Lys), tRNA(Glu) and tRNA(Gln). Acts by mediating the C-terminal thiocarboxylation of sulfur carrier URM1. Its N-terminus first activates URM1 as acyl-adenylate (-COAMP), then the persulfide sulfur on the catalytic cysteine is transferred to URM1 to form thiocarboxylation (-COSH) of its C-terminus. The reaction probably involves hydrogen sulfide that is generated from the persulfide intermediate and that acts as a nucleophile towards URM1. Subsequently, a transient disulfide bond is formed. Does not use thiosulfate as sulfur donor; NFS1 probably acting as a sulfur donor for thiocarboxylation reactions. Prior mcm(5) tRNA modification by the elongator complex is required for 2-thiolation. May also be involved in protein urmylation. In Saccharomyces cerevisiae (strain RM11-1a) (Baker's yeast), this protein is Adenylyltransferase and sulfurtransferase UBA4.